The primary structure comprises 410 residues: Probable ATP-dependent RNA helicase MG308 (410 aa).

The Helicase ATP-binding domain occupies V26–I179. A39–T46 is a binding site for ATP. The short motif at D126–D129 is the DEID box element. Positions L190–Q357 constitute a Helicase C-terminal domain.

The protein belongs to the DEAD box helicase family.

It carries out the reaction ATP + H2O = ADP + phosphate + H(+). The protein is Probable ATP-dependent RNA helicase MG308 of Mycoplasma genitalium (strain ATCC 33530 / DSM 19775 / NCTC 10195 / G37) (Mycoplasmoides genitalium).